A 932-amino-acid polypeptide reads, in one-letter code: Protein translocase subunit SecA (932 aa).

ATP contacts are provided by residues glutamine 87, 105–109 (GEGKT), and aspartate 515. 4 residues coordinate Zn(2+): cysteine 916, cysteine 918, cysteine 927, and histidine 928.

It belongs to the SecA family. In terms of assembly, monomer and homodimer. Part of the essential Sec protein translocation apparatus which comprises SecA, SecYEG and auxiliary proteins SecDF-YajC and YidC. The cofactor is Zn(2+).

Its subcellular location is the cell inner membrane. The protein localises to the cytoplasm. It catalyses the reaction ATP + H2O + cellular proteinSide 1 = ADP + phosphate + cellular proteinSide 2.. Functionally, part of the Sec protein translocase complex. Interacts with the SecYEG preprotein conducting channel. Has a central role in coupling the hydrolysis of ATP to the transfer of proteins into and across the cell membrane, serving both as a receptor for the preprotein-SecB complex and as an ATP-driven molecular motor driving the stepwise translocation of polypeptide chains across the membrane. This Burkholderia orbicola (strain AU 1054) protein is Protein translocase subunit SecA.